Here is a 424-residue protein sequence, read N- to C-terminus: Gamma-glutamyl phosphate reductase (424 aa).

Belongs to the gamma-glutamyl phosphate reductase family.

It is found in the cytoplasm. It catalyses the reaction L-glutamate 5-semialdehyde + phosphate + NADP(+) = L-glutamyl 5-phosphate + NADPH + H(+). It participates in amino-acid biosynthesis; L-proline biosynthesis; L-glutamate 5-semialdehyde from L-glutamate: step 2/2. Catalyzes the NADPH-dependent reduction of L-glutamate 5-phosphate into L-glutamate 5-semialdehyde and phosphate. The product spontaneously undergoes cyclization to form 1-pyrroline-5-carboxylate. The polypeptide is Gamma-glutamyl phosphate reductase (Halorhodospira halophila (strain DSM 244 / SL1) (Ectothiorhodospira halophila (strain DSM 244 / SL1))).